A 2302-amino-acid chain; its full sequence is Phosphatidylinositol phosphatase PTPRQ (2302 aa).

Positions 1–18 (MMDFHFSFLFLLIGTSES) are cleaved as a signal peptide. Topologically, residues 19-1908 (QVDVSSSFDG…GEGLSERTVE (1890 aa)) are extracellular. Residue N54 is glycosylated (N-linked (GlcNAc...) asparagine). 17 consecutive Fibronectin type-III domains span residues 60–155 (PPVF…TAES), 159–254 (KVVN…SSST), 310–398 (PPQN…PPDV), 401–501 (AVFD…PHND), 474–566 (GFYE…TVRT), 570–665 (VPSS…TPED), 670–759 (SPQD…TSET), 764–854 (APEN…TEED), 859–948 (PPQN…TPEG), 953–1053 (PPND…TDQD), 1058–1151 (PVGN…TEED), 1156–1243 (PPII…TDES), 1248–1341 (PPQN…TQES), 1345–1431 (AVRN…LPET), 1435–1539 (APTN…TLPG), 1544–1642 (PPEN…TLES), and 1647–1748 (PPNN…IKAP). Residues N162, N169, N318, N354, and N389 are each glycosylated (N-linked (GlcNAc...) asparagine). N733 and N746 each carry an N-linked (GlcNAc...) asparagine glycan. N-linked (GlcNAc...) asparagine glycosylation is found at N904, N998, N1010, and N1040. N-linked (GlcNAc...) asparagine glycans are attached at residues N1251 and N1256. An N-linked (GlcNAc...) asparagine glycan is attached at N1805. The chain crosses the membrane as a helical span at residues 1909–1929 (IILSVTLCILSIILLGTAIFA). Residues 1930 to 2302 (FVRIRQKQKE…VELEWEETTM (373 aa)) are Cytoplasmic-facing. Residues 2006–2262 (FQEEFSELPK…IFLHQCILDL (257 aa)) form the Tyrosine-protein phosphatase domain. Residue C2203 is the Phosphocysteine intermediate of the active site.

This sequence belongs to the protein-tyrosine phosphatase family. Receptor class 2A subfamily. Interacts with TPRN. TPRN, CLIC5 and PTPQR form concentric rings at the base of stereocilia and may form a complex.

Its subcellular location is the cell projection. It localises to the stereocilium. It is found in the apical cell membrane. The protein resides in the basal cell membrane. It carries out the reaction a 1,2-diacyl-sn-glycero-3-phospho-(1D-myo-inositol-3,4,5-trisphosphate) + H2O = a 1,2-diacyl-sn-glycero-3-phospho-(1D-myo-inositol-4,5-bisphosphate) + phosphate. The catalysed reaction is a 1,2-diacyl-sn-glycero-3-phospho-(1D-myo-inositol-3,4,5-trisphosphate) + H2O = a 1,2-diacyl-sn-glycero-3-phospho-(1D-myo-inositol-3,4-bisphosphate) + phosphate. The enzyme catalyses a 1,2-diacyl-sn-glycero-3-phospho-(1D-myo-inositol-3,5-bisphosphate) + H2O = a 1,2-diacyl-sn-glycero-3-phospho-(1D-myo-inositol-5-phosphate) + phosphate. It catalyses the reaction a 1,2-diacyl-sn-glycero-3-phospho-(1D-myo-inositol-3,5-bisphosphate) + H2O = a 1,2-diacyl-sn-glycero-3-phospho-(1D-myo-inositol-3-phosphate) + phosphate. It carries out the reaction a 1,2-diacyl-sn-glycero-3-phospho-(1D-myo-inositol-4,5-bisphosphate) + H2O = a 1,2-diacyl-sn-glycero-3-phospho-(1D-myo-inositol 4-phosphate) + phosphate. Functionally, dephosphorylates phosphatidylinositol phosphates, such as phosphatidylinositol 3,4,5-trisphosphate (PIP3) and phosphatidylinositol 3,5-diphosphates, with preference for PIP3. Phosphate can be hydrolyzed from the D3 and D5 positions in the inositol ring. Has low tyrosine-protein phosphatase activity in vitro; however, the relevance of such activity in vivo is unclear. Plays an important role in adipogenesis of mesenchymal stem cells (MSCs). Regulates the phosphorylation state of AKT1 by regulating the levels of PIP3 level in MSCs and preadipocyte cells. Required for hair bundle maturation, a process that enables hair cells to detect and transmit sound and balance signals effectively, therefore affecting auditory function. May act by regulating the level of phosphatidylinositol 4,5-bisphosphate (PIP2) level in the basal region of hair bundles. The protein is Phosphatidylinositol phosphatase PTPRQ (Ptprq) of Rattus norvegicus (Rat).